A 399-amino-acid chain; its full sequence is C-type lectin domain family 4 member M (399 aa).

At 1–49 the chain is on the cytoplasmic side; that stretch reads MSDSKEQRVQPLGLLEEDPTTSGIRLFPRDFQFQQTHGHKSSTGCLGHG. Residues 14–15 carry the Endocytosis signal motif; the sequence is LL. A helical; Signal-anchor for type II membrane protein membrane pass occupies residues 50 to 70; sequence PLVLQLLSFTLLAGVLVAILV. Topologically, residues 71–399 are extracellular; sequence QVYKVPSSLS…KKPTACFRDE (329 aa). Asparagine 92 carries N-linked (GlcNAc...) asparagine glycosylation. 7 tandem repeats follow at residues 108–130, 131–153, 154–176, 177–199, 200–222, 223–245, and 246–268. Residues 108–269 are 7 X approximate tandem repeats; that stretch reads KLQEIYQELI…AFERLCCRCP (162 aa). Intrachain disulfides connect cysteine 265/cysteine 395, cysteine 268/cysteine 279, cysteine 296/cysteine 389, and cysteine 368/cysteine 381. A C-type lectin domain is found at 274-390; sequence FFQGNCYFIS…CNVDNYWICK (117 aa). Positions 359, 361, 363, 366, 377, and 378 each coordinate Ca(2+). Asparagine 361 carries an N-linked (GlcNAc...) asparagine glycan.

Homotetramer.

The protein localises to the membrane. In terms of biological role, probable pathogen-recognition receptor involved in peripheral immune surveillance in liver. May mediate the endocytosis of pathogens which are subsequently degraded in lysosomal compartments. Probably recognizes in a calcium-dependent manner high mannose N-linked oligosaccharides in a variety of pathogen antigens. Is a receptor for ICAM3, probably by binding to mannose-like carbohydrates. This is C-type lectin domain family 4 member M (CLEC4M) from Hylobates lar (Lar gibbon).